A 144-amino-acid polypeptide reads, in one-letter code: Peptidyl-Asp metalloendopeptidase (144 aa).

Residue His64 participates in Zn(2+) binding. Residue Glu65 is part of the active site. His68 contacts Zn(2+).

It belongs to the peptidase M72 family. It depends on Zn(2+) as a cofactor.

It carries out the reaction Cleavage of Xaa-|-Asp, Xaa-|-Glu and Xaa-|-cysteic acid bonds.. Its function is as follows. Metalloprotease, specifically cleaves on the N-terminal side of aspartyl, glutamyl and cysteic acid residues. In Pseudomonas fragi, this protein is Peptidyl-Asp metalloendopeptidase.